The sequence spans 260 residues: Resolvase (260 aa).

Positions 38-241 (ELPKYLLAPE…FALDVAARHR (204 aa)) constitute a Tyr recombinase domain. Catalysis depends on residues R73, K105, H193, R196, and H219. Y228 (O-(3'-phospho-DNA)-tyrosine intermediate) is an active-site residue.

The protein belongs to the 'phage' integrase family.

Its function is as follows. This resolvase acts at the RfsF equivalent resolution sequence of pColBM-CL139. The chain is Resolvase (resD) from Escherichia coli.